Here is a 722-residue protein sequence, read N- to C-terminus: Fatty acid oxidation complex subunit alpha (722 aa).

Residues 1–189 (MIYQGKSLSA…AQGAIDAVVE (189 aa)) form an enoyl-CoA hydratase/isomerase region. Position 296 (Asp-296) interacts with substrate. Residues 311 to 722 (TKAVNKAAVL…SYFTTDVKLA (412 aa)) are 3-hydroxyacyl-CoA dehydrogenase. NAD(+) is bound by residues Met-325, Asp-344, 401–403 (VVE), Lys-408, and Ser-430. Catalysis depends on His-451, which acts as the For 3-hydroxyacyl-CoA dehydrogenase activity. Residue Asn-454 coordinates NAD(+). Substrate contacts are provided by Asn-501 and Tyr-661.

It in the N-terminal section; belongs to the enoyl-CoA hydratase/isomerase family. In the C-terminal section; belongs to the 3-hydroxyacyl-CoA dehydrogenase family. Heterotetramer of two alpha chains (FadB) and two beta chains (FadA).

The enzyme catalyses a (3S)-3-hydroxyacyl-CoA + NAD(+) = a 3-oxoacyl-CoA + NADH + H(+). The catalysed reaction is a (3S)-3-hydroxyacyl-CoA = a (2E)-enoyl-CoA + H2O. It catalyses the reaction a 4-saturated-(3S)-3-hydroxyacyl-CoA = a (3E)-enoyl-CoA + H2O. It carries out the reaction (3S)-3-hydroxybutanoyl-CoA = (3R)-3-hydroxybutanoyl-CoA. The enzyme catalyses a (3Z)-enoyl-CoA = a 4-saturated (2E)-enoyl-CoA. The catalysed reaction is a (3E)-enoyl-CoA = a 4-saturated (2E)-enoyl-CoA. It functions in the pathway lipid metabolism; fatty acid beta-oxidation. Functionally, involved in the aerobic and anaerobic degradation of long-chain fatty acids via beta-oxidation cycle. Catalyzes the formation of 3-oxoacyl-CoA from enoyl-CoA via L-3-hydroxyacyl-CoA. It can also use D-3-hydroxyacyl-CoA and cis-3-enoyl-CoA as substrate. The protein is Fatty acid oxidation complex subunit alpha of Colwellia psychrerythraea (strain 34H / ATCC BAA-681) (Vibrio psychroerythus).